A 126-amino-acid polypeptide reads, in one-letter code: Phosphoribosyl-AMP cyclohydrolase (126 aa).

Asp-82 contacts Mg(2+). Cys-83 is a binding site for Zn(2+). Mg(2+) is bound by residues Asp-84 and Asp-86. Residues Cys-99 and Cys-106 each coordinate Zn(2+).

This sequence belongs to the PRA-CH family. As to quaternary structure, homodimer. It depends on Mg(2+) as a cofactor. The cofactor is Zn(2+).

Its subcellular location is the cytoplasm. It catalyses the reaction 1-(5-phospho-beta-D-ribosyl)-5'-AMP + H2O = 1-(5-phospho-beta-D-ribosyl)-5-[(5-phospho-beta-D-ribosylamino)methylideneamino]imidazole-4-carboxamide. It functions in the pathway amino-acid biosynthesis; L-histidine biosynthesis; L-histidine from 5-phospho-alpha-D-ribose 1-diphosphate: step 3/9. Catalyzes the hydrolysis of the adenine ring of phosphoribosyl-AMP. The protein is Phosphoribosyl-AMP cyclohydrolase of Sphingopyxis alaskensis (strain DSM 13593 / LMG 18877 / RB2256) (Sphingomonas alaskensis).